The chain runs to 382 residues: Dual-specificity RNA methyltransferase RlmN (382 aa).

Catalysis depends on Glu-96, which acts as the Proton acceptor. The Radical SAM core domain occupies Gln-102–Asp-342. An intrachain disulfide couples Cys-109 to Cys-345. Positions 116, 120, and 123 each coordinate [4Fe-4S] cluster. Residues Gly-170 to Glu-171, Ser-202, Ser-224 to His-226, and Asn-302 each bind S-adenosyl-L-methionine. The S-methylcysteine intermediate role is filled by Cys-345.

The protein belongs to the radical SAM superfamily. RlmN family. Requires [4Fe-4S] cluster as cofactor.

It is found in the cytoplasm. The enzyme catalyses adenosine(2503) in 23S rRNA + 2 reduced [2Fe-2S]-[ferredoxin] + 2 S-adenosyl-L-methionine = 2-methyladenosine(2503) in 23S rRNA + 5'-deoxyadenosine + L-methionine + 2 oxidized [2Fe-2S]-[ferredoxin] + S-adenosyl-L-homocysteine. The catalysed reaction is adenosine(37) in tRNA + 2 reduced [2Fe-2S]-[ferredoxin] + 2 S-adenosyl-L-methionine = 2-methyladenosine(37) in tRNA + 5'-deoxyadenosine + L-methionine + 2 oxidized [2Fe-2S]-[ferredoxin] + S-adenosyl-L-homocysteine. Specifically methylates position 2 of adenine 2503 in 23S rRNA and position 2 of adenine 37 in tRNAs. m2A2503 modification seems to play a crucial role in the proofreading step occurring at the peptidyl transferase center and thus would serve to optimize ribosomal fidelity. The polypeptide is Dual-specificity RNA methyltransferase RlmN (Pseudomonas syringae pv. tomato (strain ATCC BAA-871 / DC3000)).